The sequence spans 178 residues: Conodipine-P1 (178 aa).

Positions 1-24 (MKLLAPVLWAMAALGVTWLVAVDS) are cleaved as a signal peptide. Residues P38, P42, and P49 each carry the 4-hydroxyproline; partial modification. H54 is an active-site residue. The propeptide at 98–130 (KREVTSHRATSIAHSRLWKTALDQKSFLNRKAR) is interchain peptide. Position 131 is a pyrrolidone carboxylic acid (Q131). A 4-hydroxyproline; partial modification is found at P137.

The protein belongs to the phospholipase A2 family. Group IX subfamily. As to quaternary structure, heterodimer of an alpha and a beta chain; probably disulfide-linked. The cofactor is Ca(2+). Expressed by the venom duct.

The protein localises to the secreted. The enzyme catalyses a 1,2-diacyl-sn-glycero-3-phosphocholine + H2O = a 1-acyl-sn-glycero-3-phosphocholine + a fatty acid + H(+). In terms of biological role, catalyzes the calcium-dependent hydrolysis of the 2-acyl groups in 3-sn-phosphoglycerides. The sequence is that of Conodipine-P1 from Conus purpurascens (Purple cone).